Consider the following 803-residue polypeptide: Volume-regulated anion channel subunit LRRC8B (803 aa).

Residues 1–25 lie on the Cytoplasmic side of the membrane; it reads MITLTELKCLADAQSSYHILKPWWD. The chain crosses the membrane as a helical span at residues 26–46; sequence VFWYYITLIMLLVAVLAGALQ. The Extracellular portion of the chain corresponds to 47 to 119; it reads LTQSRVLCCL…YEKQLHWFAK (73 aa). Cystine bridges form between Cys-55–Cys-304 and Cys-109–Cys-289. Residue Asn-78 is glycosylated (N-linked (GlcNAc...) asparagine). The chain crosses the membrane as a helical span at residues 120 to 140; that stretch reads FFPYLVLLHTLIFAACSNFWL. Topologically, residues 141–261 are cytoplasmic; sequence HYPSTSSRLE…DIIYRVYLKQ (121 aa). A phosphoserine mark is found at Ser-186 and Ser-196. Residues 262 to 282 traverse the membrane as a helical segment; the sequence is IIVKVILFVLIITYVPYFLTH. At 283–307 the chain is on the extracellular side; that stretch reads ITLEIDCSVDVQAFTGYKRYQCVYS. The helical transmembrane segment at 308–328 threads the bilayer; sequence LAEIFKVLASFYVILVILYGL. The Cytoplasmic portion of the chain corresponds to 329–803; that stretch reads TSSYSLWWML…ERLQTCLDKC (475 aa). LRR repeat units lie at residues 464–486, 488–509, 511–532, 539–559, 562–582, 586–607, 609–630, 634–655, 657–678, 680–701, 703–724, 726–747, and 749–771; these read NLKELRVYHSSLVVDHPALAFLE, NLKILRLKFTEMGKIPRWVFHL, NLKELYLSGCVLPEQLSTMQLE, NLRTLYLKSSLSRIPQVVTDL, SLQKLSLDNEGSKLVVLNNLK, NLKSLELISCDLERIPHSIFSL, NLHELDLRENNLKTVEEIISFQ, NLSCLKLWHNNIAYIPAQIGAL, NLEQLSLDHNNIENLPLQLFLC, KLHYLDLSYNHLTFIPEEIQYL, NLQYFAVTNNNIEMLPDGLFQC, KLQCLLLGKNSLMNLSPHVGEL, and NLTHLELIGNYLETLPPELEGCQ.

It belongs to the LRRC8 family. Heterohexamer; oligomerizes with other LRRC8 proteins (LRRC8A, LRRC8C, LRRC8D and/or LRRC8E) to form a heterohexamer. In vivo, the subunit composition may depend primarily on expression levels, and heterooligomeric channels containing various proportions of the different LRRC8 proteins may coexist.

Its subcellular location is the cell membrane. It localises to the endoplasmic reticulum membrane. It carries out the reaction chloride(in) = chloride(out). The catalysed reaction is iodide(out) = iodide(in). It catalyses the reaction taurine(out) = taurine(in). In terms of biological role, non-essential component of the volume-regulated anion channel (VRAC, also named VSOAC channel), an anion channel required to maintain a constant cell volume in response to extracellular or intracellular osmotic changes. The VRAC channel conducts iodide better than chloride and can also conduct organic osmolytes like taurine. Channel activity requires LRRC8A plus at least one other family member (LRRC8B, LRRC8C, LRRC8D or LRRC8E); channel characteristics depend on the precise subunit composition. The chain is Volume-regulated anion channel subunit LRRC8B from Homo sapiens (Human).